Reading from the N-terminus, the 437-residue chain is MNIFQHDIQDVGQGNVVAILGSQWGDEGKGKIIDILSKHSDITCRFNGGSNAGHTISVNDKKYALHLLPCGILYENNICVLGNGMVVHVKSLIDEINSIGGNIIDRLYLSDKSHILFDIHQTIDSMQENKKLKEGKQIGTTKRGIGPCYSTKVSRVGIRLGSLKNFEHFKSLYVKLIDNLMELYNISDYNKEEELEAFYQYHLLLKDRIIDVISFMNNQLNEKKKILIEGANAAMLDIDFGTYPYVTSSCTTVGGIFSGLGINHKKLNLTVGVVKSYLTRVGCGPFMTELTNEIGDYLREKGYEYGTTTKRPRRCGWLDIPMLLYVKCINSIDIINLTKLDVLSGLKEISLCVGYRSKATGELLQKGCYPVDEDAPEHYEPVYEQFEGWEEDISNCESFEELPENARKYVLAIEKYVGSPIVWIGIGANRNNTIMKK.

GTP is bound by residues 25 to 31, 53 to 55, and lysine 62; these read GDEGKGK and GHT. The active-site Proton acceptor is aspartate 26. Positions 26 and 53 each coordinate Mg(2+). IMP is bound by residues 26–29 and 51–54; these read DEGK and NAGH. The active-site Proton donor is the histidine 54. Residues threonine 141, arginine 155, asparagine 232, and threonine 247 each coordinate IMP. Threonine 307 is a GTP binding site. 307 to 313 contributes to the substrate binding site; sequence TTTKRPR. Arginine 311 is a binding site for IMP. GTP is bound by residues arginine 313, 339–341, and 425–427; these read KLD and GIG.

Belongs to the adenylosuccinate synthetase family. In terms of assembly, homodimer. It depends on Mg(2+) as a cofactor.

The protein localises to the cytoplasm. The catalysed reaction is IMP + L-aspartate + GTP = N(6)-(1,2-dicarboxyethyl)-AMP + GDP + phosphate + 2 H(+). The protein operates within purine metabolism; AMP biosynthesis via de novo pathway; AMP from IMP: step 1/2. In terms of biological role, plays an important role in the salvage pathway for purine nucleotide biosynthesis. Catalyzes the first committed step in the biosynthesis of AMP from IMP. This Plasmodium vivax (strain Salvador I) protein is Adenylosuccinate synthetase.